We begin with the raw amino-acid sequence, 93 residues long: Small ribosomal subunit protein bS20 (93 aa).

It belongs to the bacterial ribosomal protein bS20 family.

Functionally, binds directly to 16S ribosomal RNA. This Hydrogenobaculum sp. (strain Y04AAS1) protein is Small ribosomal subunit protein bS20.